The primary structure comprises 1119 residues: Nuclear matrix constituent protein 1 (1119 aa).

Coiled coils occupy residues 140–226 and 328–488; these read LAEL…LYQQ and LQNR…LDER. 4 disordered regions span residues 846–884, 903–974, 989–1015, and 1046–1109; these read LDVE…AEEA, LASA…PTGR, NGAL…EIPD, and GINA…EVSM. Composition is skewed to basic residues over residues 859-876 and 920-929; these read GNRK…RKRS and KRTRNSRKRN. Residues 1075-1085 show a composition bias toward polar residues; that stretch reads TPEQSRGYQNQ.

This sequence belongs to the CRWN family.

The protein localises to the nucleus matrix. The protein resides in the nucleus lamina. Its function is as follows. Architectural component of nuclear structure that plays different roles in controlling nuclear size and morphology. In Daucus carota subsp. sativus (Carrot), this protein is Nuclear matrix constituent protein 1.